Reading from the N-terminus, the 209-residue chain is MTVLLFGFEPFLEYKENPSQLIAEALNGSTILKEEVKGVILPVEYEKIEDLIVTKIREMKPILTLGIGVAPGRAKITPEKIAINYKYSREGDNAGKKYKGEKIDPLGQDGIFTNIPVEDLVDLLNENGIPAELSLSAGSYLCNNAMYIIIREARKYNSLGGFIHVPLHESYAARIQRPIPSMSLDTMIRGIRLSMEFILTNKKENLTFS.

Residues E79, C142, and H164 contribute to the active site.

Belongs to the peptidase C15 family. Homotetramer.

It localises to the cytoplasm. It catalyses the reaction Release of an N-terminal pyroglutamyl group from a polypeptide, the second amino acid generally not being Pro.. Functionally, removes 5-oxoproline from various penultimate amino acid residues except L-proline. The polypeptide is Pyrrolidone-carboxylate peptidase (Saccharolobus islandicus (strain Y.N.15.51 / Yellowstone #2) (Sulfolobus islandicus)).